The primary structure comprises 312 residues: Malate dehydrogenase (312 aa).

Residues 7–13 and Asp34 each bind NAD(+); that span reads GAAGGIG. Residues Arg81 and Arg87 each coordinate substrate. Residues Asn94 and 117–119 each bind NAD(+); that span reads ITN. Residues Asn119 and Arg153 each contribute to the substrate site. His177 acts as the Proton acceptor in catalysis. Met227 serves as a coordination point for NAD(+).

Belongs to the LDH/MDH superfamily. MDH type 1 family. Homodimer.

The catalysed reaction is (S)-malate + NAD(+) = oxaloacetate + NADH + H(+). Catalyzes the reversible oxidation of malate to oxaloacetate. The chain is Malate dehydrogenase from Escherichia coli O139:H28 (strain E24377A / ETEC).